The sequence spans 180 residues: NADH-quinone oxidoreductase subunit I (180 aa).

4Fe-4S ferredoxin-type domains follow at residues 50 to 80 (LTRDPDGEERCVACNLCAVACPVGCISLQKA) and 90 to 119 (EFFRINFSRCIFCGLCEEACPTTAIQLTPD). [4Fe-4S] cluster contacts are provided by cysteine 60, cysteine 63, cysteine 66, cysteine 70, cysteine 99, cysteine 102, cysteine 105, and cysteine 109.

The protein belongs to the complex I 23 kDa subunit family. NDH-1 is composed of 13 different subunits. Subunits NuoA, H, J, K, L, M, N constitute the membrane sector of the complex. [4Fe-4S] cluster serves as cofactor.

The protein resides in the cell inner membrane. The catalysed reaction is a quinone + NADH + 5 H(+)(in) = a quinol + NAD(+) + 4 H(+)(out). NDH-1 shuttles electrons from NADH, via FMN and iron-sulfur (Fe-S) centers, to quinones in the respiratory chain. The immediate electron acceptor for the enzyme in this species is believed to be ubiquinone. Couples the redox reaction to proton translocation (for every two electrons transferred, four hydrogen ions are translocated across the cytoplasmic membrane), and thus conserves the redox energy in a proton gradient. This is NADH-quinone oxidoreductase subunit I from Shigella sonnei (strain Ss046).